A 1564-amino-acid chain; its full sequence is ATP-dependent permease PDR10 (1564 aa).

The segment covering 1-16 has biased composition (polar residues); the sequence is MLQAPSSSNSGLNQGN. The tract at residues 1 to 37 is disordered; it reads MLQAPSSSNSGLNQGNAAPDGPPNETQPYEGLDAAAQ. Residues 1 to 587 lie on the Cytoplasmic side of the membrane; it reads MLQAPSSSNS…AAIFFAILFN (587 aa). The 257-residue stretch at 174-430 folds into the ABC transporter 1 domain; the sequence is ISRRLFHRTH…FQRMGYVCPE (257 aa). The next 5 helical transmembrane spans lie at 588-608, 624-644, 674-694, 699-719, and 732-752; these read AFSSLLEIFSLYETRPITEKH, TFSDVPTKLATAVTFNIPYYF, RCIGSVSKTLPQAMVPASVLL, MYTGFAIPRVQMLGWSKWISY, and INEFHGRNFPCAQYIPSGPNY. The N-linked (GlcNAc...) asparagine glycan is linked to N754. Basic residues predominate over residues 839-849; sequence KGIVSEKKKKN. A disordered region spans residues 839–872; that stretch reads KGIVSEKKKKNQPTLSTSDAEKDVEMNNNSSATD. A helical transmembrane segment spans residues 841 to 861; it reads IVSEKKKKNQPTLSTSDAEKD. Residues 862–1304 lie on the Cytoplasmic side of the membrane; that stretch reads VEMNNNSSAT…IFMFTVVFNP (443 aa). The ABC transporter 2 domain occupies 923–1166; that stretch reads FHWKNLCYDI…MINYFEAHGA (244 aa). 959–966 provides a ligand contact to ATP; the sequence is GASGAGKT. A run of 6 helical transmembrane segments spans residues 1305 to 1325, 1340 to 1360, 1390 to 1410, 1426 to 1446, 1459 to 1479, and 1491 to 1511; these read ILQQYLPLFVQQRELYEARER, ILVEIPWNLLAGTIAFFVYYY, VYISSMGVLVISCIEIAENAA, VLATPNILPRFWIFMYRVSPL, ANASVVCSSNELLKIVPPSGM, and STGTGYLLDGSSETECHFCQF. Over 1512-1564 the chain is Cytoplasmic; sequence SSTNDYLATVSSSYSRRWMNYGIFSAYIVFDYCAAIFLYWLVRVPKKSKKLKK.

It belongs to the ABC transporter superfamily. ABCG family. PDR (TC 3.A.1.205) subfamily.

It localises to the membrane. This is ATP-dependent permease PDR10 (PDR10) from Saccharomyces cerevisiae (strain ATCC 204508 / S288c) (Baker's yeast).